Here is a 269-residue protein sequence, read N- to C-terminus: Small ribosomal subunit protein uS2 (269 aa).

The tract at residues 228–269 (ARAERQAAAAKDAAGDTGKSEADAEAVKAEAAAEEKAETTEA) is disordered. The segment covering 233 to 244 (QAAAAKDAAGDT) has biased composition (low complexity). Basic and acidic residues predominate over residues 245-269 (GKSEADAEAVKAEAAAEEKAETTEA).

This sequence belongs to the universal ribosomal protein uS2 family.

The protein is Small ribosomal subunit protein uS2 of Corynebacterium urealyticum (strain ATCC 43042 / DSM 7109).